The following is a 264-amino-acid chain: MIHDDDPNAPGAPHDDATAAPASATRAAPAAGDDDDANPLHLRRIRSFVTRAGRVSTGQRRAIDELGPRFVIPYGSAQPDWDAIFGRRAPRVLEIGFGMGASTAEIAALRPGDDFIGVEVHEPGVGALLKLIGEQQLSNIRIIQHDAVEVLAQMIAPDSLDGVHIFFPDPWHKARHHKRRLIQPPFVAQLAAHLKPGAYLHCATDWQNYAEQMLEVLSADPSLENTAQNYAPRPGYRPVTKFERRGLRLGHGVWDLVFRKKHAG.

Positions 1–39 are disordered; that stretch reads MIHDDDPNAPGAPHDDATAAPASATRAAPAAGDDDDANP. Low complexity predominate over residues 18–31; sequence TAAPASATRAAPAA. Positions 94, 119, 146, and 169 each coordinate S-adenosyl-L-methionine. The active site involves D169. Residues K173, D205, and 240-243 each bind substrate; that span reads TKFE.

It belongs to the class I-like SAM-binding methyltransferase superfamily. TrmB family.

The catalysed reaction is guanosine(46) in tRNA + S-adenosyl-L-methionine = N(7)-methylguanosine(46) in tRNA + S-adenosyl-L-homocysteine. It participates in tRNA modification; N(7)-methylguanine-tRNA biosynthesis. Catalyzes the formation of N(7)-methylguanine at position 46 (m7G46) in tRNA. The chain is tRNA (guanine-N(7)-)-methyltransferase from Burkholderia mallei (strain ATCC 23344).